An 872-amino-acid polypeptide reads, in one-letter code: Extended synaptotagmin-2-A (872 aa).

The disordered stretch occupies residues 1 to 25 (MSSESSAEKGPPPSPAENVQPGVPP). Topologically, residues 1–31 (MSSESSAEKGPPPSPAENVQPGVPPAAEEPG) are cytoplasmic. Residues 32–52 (MISVDIAGLFYQFSKTFILIF) traverse the membrane as a helical segment. Topologically, residues 53 to 55 (PVY) are lumenal. The helical transmembrane segment at 56–76 (VLGYFGLSFSWLLIALVLLLW) threads the bilayer. Residues 77 to 872 (WRRNKGNKNS…EDGTRPAVSS (796 aa)) lie on the Cytoplasmic side of the membrane. Positions 119–298 (DIERAEWLNK…LPNRITVPLV (180 aa)) constitute an SMP-LTD domain. C2 domains lie at 297–417 (LVSD…DEWF) and 442–588 (NLDQ…HLNN). 9 residues coordinate Ca(2+): lysine 328, aspartate 329, aspartate 341, aspartate 388, glutamate 389, aspartate 390, aspartate 392, aspartate 394, and aspartate 395. The segment covering 608 to 617 (KPVRSPDEQH) has biased composition (basic and acidic residues). The disordered stretch occupies residues 608-711 (KPVRSPDEQH…EPTPSIASDI (104 aa)). The segment covering 632-652 (PPTPQMPSPSPAVAHKPPPTP) has biased composition (pro residues). The span at 664–681 (NKGTPPSASPKSPTELHQ) shows a compositional bias: polar residues. Residues 682–696 (SSSSLSGSSFTYSPS) show a composition bias toward low complexity. One can recognise a C2 3 domain in the interval 737 to 859 (PLGQIQLTIR…DAAKGWTQWY (123 aa)). The segment at 784-791 (KRRSGRRK) is required for phosphatidylinositol 4,5-bisphosphate-dependent location at the cell membrane.

This sequence belongs to the extended synaptotagmin family. Interacts with fgfr1 that has been activated by fgf1 binding. Interacts (via C2 domains) with the AP-2 complex (via an alpha subunit). Identified in a complex with the AP-2 complex and fgfr1.

It is found in the cell membrane. Its subcellular location is the endoplasmic reticulum membrane. Tethers the endoplasmic reticulum to the cell membrane and promotes the formation of appositions between the endoplasmic reticulum and the cell membrane. Binds glycerophospholipids in a barrel-like domain and may play a role in cellular lipid transport. Plays a role in the rapid internalization of fgfr1 that has been activated by fgf1 binding; this occurs most likely via the AP-2 complex. Required for normal fgf signaling and the activation of downstream signaling cascades via its role in the internalization of activated fgfr1. Required for normal embryonic development via its role in fgf signaling and the downstream regulation of t/xBRA expression. The protein is Extended synaptotagmin-2-A (esyt2-a) of Xenopus laevis (African clawed frog).